The primary structure comprises 295 residues: MTHLFEGVGVALTTPFTNNKVNLEALKAHVNFLLENNAQAIIVNGTTAESPTLTTDEKELILKTVIDLVDKRVPVIAGTGTNDTEKSIQASIQAKALGADAIMLITPYYNKTNQRGLVKHFEAIADAVKLPVVLYNVPSRTNMTIEPETVEILSQHPYIVALKDATNDFEYLEEVKKRIDTNSFALYSGNDDNVVEYYQRGGQGVISVIANVIPKEFQALYDAQQSGLDIQDQFKPIGTLLSALSVDINPIPIKALTSYLGFGNYELRLPLVSLEDTDTKVLREAYDTFKAGENE.

Position 47 (threonine 47) interacts with pyruvate. Tyrosine 135 functions as the Proton donor/acceptor in the catalytic mechanism. Residue lysine 163 is the Schiff-base intermediate with substrate of the active site. Residue isoleucine 206 coordinates pyruvate.

As to quaternary structure, homodimer. In fact, exists in a monomer-dimer equilibrium in solution, shifted in favor of the dimer in presence of the substrate pyruvate; the monomer has significantly reduced activity compared with the dimer.

It is found in the cytoplasm. The enzyme catalyses L-aspartate 4-semialdehyde + pyruvate = (2S,4S)-4-hydroxy-2,3,4,5-tetrahydrodipicolinate + H2O + H(+). Its pathway is amino-acid biosynthesis; L-lysine biosynthesis via DAP pathway; (S)-tetrahydrodipicolinate from L-aspartate: step 3/4. Its activity is regulated as follows. Is insensitive to lysine-feedback inhibition. Shows ASA substrate inhibition. Its function is as follows. Catalyzes the condensation of (S)-aspartate-beta-semialdehyde [(S)-ASA] and pyruvate to 4-hydroxy-tetrahydrodipicolinate (HTPA). This chain is 4-hydroxy-tetrahydrodipicolinate synthase, found in Staphylococcus aureus (strain MRSA252).